Reading from the N-terminus, the 224-residue chain is 4'-phosphopantetheinyl transferase ffp (224 aa).

Mg(2+) contacts are provided by Asp-107, Glu-109, and Glu-151. Positions 158–189 (GKGLSLPLDSFSVRLHEDGRVSVELPEHHTPC) are peptidyl carrier protein binding.

The protein belongs to the P-Pant transferase superfamily. Gsp/Sfp/HetI/AcpT family. Mg(2+) serves as cofactor.

It catalyses the reaction apo-[peptidyl-carrier protein] + CoA = holo-[peptidyl-carrier protein] + adenosine 3',5'-bisphosphate + H(+). May activate the peptidyl carrier protein (PCP) domains of fengycin synthase by transferring the 4'-phosphopantetheinyl moiety of coenzyme A (CoA) to a serine residue. This chain is 4'-phosphopantetheinyl transferase ffp (ffp), found in Bacillus subtilis.